Consider the following 583-residue polypeptide: Proteasome-associated ATPase (583 aa).

Positions 1 to 19 (METPNQDSGRTPTEQSAAN) are enriched in polar residues. A disordered region spans residues 1 to 22 (METPNQDSGRTPTEQSAANDLS). Residues 24 to 75 (ADRQVNILRDKLRHIDRQLAAATQNNTKLVSMLETAKAEILRLKNALDQEGQ) are a coiled coil. 271 to 276 (GCGKTL) serves as a coordination point for ATP. Residues 582–583 (YL) are docks into pockets in the proteasome alpha-ring.

It belongs to the AAA ATPase family. Homohexamer. Assembles into a hexameric ring structure that caps the 20S proteasome core. Strongly interacts with the prokaryotic ubiquitin-like protein Pup through a hydrophobic interface; the interacting region of ARC lies in its N-terminal coiled-coil domain. There is one Pup binding site per ARC hexamer ring. Upon ATP-binding, the C-terminus of ARC interacts with the alpha-rings of the proteasome core, possibly by binding to the intersubunit pockets.

It participates in protein degradation; proteasomal Pup-dependent pathway. ATPase which is responsible for recognizing, binding, unfolding and translocation of pupylated proteins into the bacterial 20S proteasome core particle. May be essential for opening the gate of the 20S proteasome via an interaction with its C-terminus, thereby allowing substrate entry and access to the site of proteolysis. Thus, the C-termini of the proteasomal ATPase may function like a 'key in a lock' to induce gate opening and therefore regulate proteolysis. In Pseudarthrobacter chlorophenolicus (strain ATCC 700700 / DSM 12829 / CIP 107037 / JCM 12360 / KCTC 9906 / NCIMB 13794 / A6) (Arthrobacter chlorophenolicus), this protein is Proteasome-associated ATPase.